We begin with the raw amino-acid sequence, 327 residues long: Biotin synthase (327 aa).

The Radical SAM core domain maps to 48 to 278; that stretch reads YCGDGVGLCM…DRHITVCGGR (231 aa). Residues Cys66, Cys70, and Cys73 each coordinate [4Fe-4S] cluster. Residues Ser143 and Cys203 each coordinate [2Fe-2S] cluster.

The protein belongs to the radical SAM superfamily. Biotin synthase family. Homodimer. The cofactor is [4Fe-4S] cluster. [2Fe-2S] cluster is required as a cofactor.

The enzyme catalyses (4R,5S)-dethiobiotin + (sulfur carrier)-SH + 2 reduced [2Fe-2S]-[ferredoxin] + 2 S-adenosyl-L-methionine = (sulfur carrier)-H + biotin + 2 5'-deoxyadenosine + 2 L-methionine + 2 oxidized [2Fe-2S]-[ferredoxin]. It functions in the pathway cofactor biosynthesis; biotin biosynthesis; biotin from 7,8-diaminononanoate: step 2/2. Functionally, catalyzes the conversion of dethiobiotin (DTB) to biotin by the insertion of a sulfur atom into dethiobiotin via a radical-based mechanism. This chain is Biotin synthase, found in Syntrophotalea carbinolica (strain DSM 2380 / NBRC 103641 / GraBd1) (Pelobacter carbinolicus).